We begin with the raw amino-acid sequence, 142 residues long: Large ribosomal subunit protein uL11 (142 aa).

It belongs to the universal ribosomal protein uL11 family. In terms of assembly, part of the ribosomal stalk of the 50S ribosomal subunit. Interacts with L10 and the large rRNA to form the base of the stalk. L10 forms an elongated spine to which L12 dimers bind in a sequential fashion forming a multimeric L10(L12)X complex. Post-translationally, one or more lysine residues are methylated.

Functionally, forms part of the ribosomal stalk which helps the ribosome interact with GTP-bound translation factors. The sequence is that of Large ribosomal subunit protein uL11 from Nitrobacter hamburgensis (strain DSM 10229 / NCIMB 13809 / X14).